A 127-amino-acid chain; its full sequence is MTFEMLYSKIHRATVSDANLNYVGSITIDEDLMKAANLRVGQKVDIVNINNGERFQTYIIKGKAGSKDMCLNGAAARKVEIGDKIIVIAYATFSEAELENYKPTVVLVDDKNNIELITHELEGGKYV.

Ser-25 acts as the Schiff-base intermediate with substrate; via pyruvic acid in catalysis. Ser-25 is modified (pyruvic acid (Ser)). Substrate is bound at residue Thr-57. The active-site Proton donor is Tyr-58. Residue 73-75 (GAA) coordinates substrate.

The protein belongs to the PanD family. Heterooctamer of four alpha and four beta subunits. Pyruvate is required as a cofactor. Post-translationally, is synthesized initially as an inactive proenzyme, which is activated by self-cleavage at a specific serine bond to produce a beta-subunit with a hydroxyl group at its C-terminus and an alpha-subunit with a pyruvoyl group at its N-terminus.

The protein resides in the cytoplasm. It catalyses the reaction L-aspartate + H(+) = beta-alanine + CO2. It functions in the pathway cofactor biosynthesis; (R)-pantothenate biosynthesis; beta-alanine from L-aspartate: step 1/1. Functionally, catalyzes the pyruvoyl-dependent decarboxylation of aspartate to produce beta-alanine. This Aliarcobacter butzleri (strain RM4018) (Arcobacter butzleri) protein is Aspartate 1-decarboxylase.